The following is a 42-amino-acid chain: Large ribosomal subunit protein bL36 (42 aa).

This sequence belongs to the bacterial ribosomal protein bL36 family.

This Ehrlichia chaffeensis (strain ATCC CRL-10679 / Arkansas) protein is Large ribosomal subunit protein bL36.